The following is a 131-amino-acid chain: Small ribosomal subunit protein uS11 (131 aa).

It belongs to the universal ribosomal protein uS11 family. Part of the 30S ribosomal subunit. Interacts with proteins S7 and S18. Binds to IF-3.

Its function is as follows. Located on the platform of the 30S subunit, it bridges several disparate RNA helices of the 16S rRNA. Forms part of the Shine-Dalgarno cleft in the 70S ribosome. This chain is Small ribosomal subunit protein uS11, found in Halorhodospira halophila (strain DSM 244 / SL1) (Ectothiorhodospira halophila (strain DSM 244 / SL1)).